The chain runs to 201 residues: Peptidyl-tRNA hydrolase (201 aa).

Tyr-17 is a binding site for tRNA. His-22 acts as the Proton acceptor in catalysis. Positions 76, 78, and 124 each coordinate tRNA.

The protein belongs to the PTH family. As to quaternary structure, monomer.

Its subcellular location is the cytoplasm. The enzyme catalyses an N-acyl-L-alpha-aminoacyl-tRNA + H2O = an N-acyl-L-amino acid + a tRNA + H(+). Functionally, hydrolyzes ribosome-free peptidyl-tRNAs (with 1 or more amino acids incorporated), which drop off the ribosome during protein synthesis, or as a result of ribosome stalling. In terms of biological role, catalyzes the release of premature peptidyl moieties from peptidyl-tRNA molecules trapped in stalled 50S ribosomal subunits, and thus maintains levels of free tRNAs and 50S ribosomes. This is Peptidyl-tRNA hydrolase from Nitratidesulfovibrio vulgaris (strain ATCC 29579 / DSM 644 / CCUG 34227 / NCIMB 8303 / VKM B-1760 / Hildenborough) (Desulfovibrio vulgaris).